The sequence spans 149 residues: C-type lectin domain family 2 member B (149 aa).

At 1–7 the chain is on the cytoplasmic side; it reads MMTKHKK. A helical; Signal-anchor for type II membrane protein transmembrane segment spans residues 8–25; the sequence is CFIIVGVLITTNIITLIV. The Extracellular segment spans residues 26–149; the sequence is KLTRDSQSLC…RKWICRKRIH (124 aa). Cysteine 35 and cysteine 46 are oxidised to a cystine. The region spanning 42–145 is the C-type lectin domain; that stretch reads FQNKCYYFSK…CYTERKWICR (104 aa). 3 N-linked (GlcNAc...) asparagine glycosylation sites follow: asparagine 57, asparagine 62, and asparagine 100. Disulfide bonds link cysteine 63–cysteine 144 and cysteine 123–cysteine 136.

As to quaternary structure, homodimer. Interacts with NKp80/KLRF1. (Microbial infection) Ubiquitinated by human herpesvirus 8 protein K5, leading to endolysosomal degradation. In terms of processing, N-linked glycosylated; required to enable surface expression and the extent of surface expression correlates with the number of functional conventional N-glycosylation sites. As to expression, expressed preferentially in lymphoid tissues, and in most hematopoietic cell types.

Its subcellular location is the cell membrane. The protein resides in the golgi apparatus membrane. Functionally, membrane-bound protein expressed on myeloid cells which acts as a ligand to stimulate the activating receptor NKp80/KLRF1, expressed on the surface of natural killer (NK) cells. In turn, stimulates NK-cell cytotoxicity and cytokine production leading to the cytolysis of malignant CLEC2B-expressing myeloid cells. In Homo sapiens (Human), this protein is C-type lectin domain family 2 member B (CLEC2B).